Reading from the N-terminus, the 256-residue chain is Proteasome subunit beta type-5 (256 aa).

A propeptide spans 1 to 55 (removed in mature form); it reads CNMALADIVRLPPASEAPFAPLGAPRDLSGPPSKLAVRPWGGADLPGPGLQLLHG. The active-site Nucleophile is threonine 56.

This sequence belongs to the peptidase T1B family. The 26S proteasome consists of a 20S proteasome core and two 19S regulatory subunits. The 20S proteasome core is a barrel-shaped complex made of 28 subunits that are arranged in four stacked rings. The two outer rings are each formed by seven alpha subunits, and the two inner rings are formed by seven beta subunits. The proteolytic activity is exerted by three beta-subunits PSMB5, PSMB6 and PSMB7. Directly interacts with POMP. Interacts with ABCB1 and TAP1.

Its subcellular location is the cytoplasm. It localises to the nucleus. It carries out the reaction Cleavage of peptide bonds with very broad specificity.. In terms of biological role, component of the 20S core proteasome complex involved in the proteolytic degradation of most intracellular proteins. This complex plays numerous essential roles within the cell by associating with different regulatory particles. Associated with two 19S regulatory particles, forms the 26S proteasome and thus participates in the ATP-dependent degradation of ubiquitinated proteins. The 26S proteasome plays a key role in the maintenance of protein homeostasis by removing misfolded or damaged proteins that could impair cellular functions, and by removing proteins whose functions are no longer required. Associated with the PA200 or PA28, the 20S proteasome mediates ubiquitin-independent protein degradation. This type of proteolysis is required in several pathways including spermatogenesis (20S-PA200 complex) or generation of a subset of MHC class I-presented antigenic peptides (20S-PA28 complex). Within the 20S core complex, PSMB5 displays a chymotrypsin-like activity. The polypeptide is Proteasome subunit beta type-5 (PSMB5) (Gallus gallus (Chicken)).